The primary structure comprises 539 residues: Tripartite motif-containing protein 26 (539 aa).

Residues 16 to 57 (CSICLDYLRDPVTIDCGHVFCRSCTTDVRPISGSRPVCPLCK) form an RING-type zinc finger. The B box-type zinc-finger motif lies at 97–138 (QDAKLCERHREKLHYYCEDDGKLLCVMCRESREHRPHTAVLM). 4 residues coordinate Zn(2+): Cys-102, His-105, Cys-124, and His-130. Residues 188–227 (IVAEFEQGHQFLREREEHLLEQLAKLEQELTEGREKFKSR) are a coiled coil. In terms of domain architecture, B30.2/SPRY spans 295–539 (RGLREFQGKL…WPGTRLLLRP (245 aa)). A disordered region spans residues 376 to 437 (REGWSEDEEE…EEEEEVLESC (62 aa)). Over residues 380-434 (SEDEEEGDEEEEGEEEEEEEEAGYGDGYDDWETDEDEESLGDEEEEEEEEEEEVL) the composition is skewed to acidic residues.

This sequence belongs to the TRIM/RBCC family. In terms of assembly, interacts with TBK1; this interaction bridges together TBK1 and NEMO in order to activate TBK1. Interacts with INCA1. In terms of processing, autoubiquitinates upon viral infection. In turn, autoubiquitinated TRIM26 recruits NEMO and bridges TBK1-NEMO interaction.

It is found in the cytoplasm. It localises to the nucleus. The catalysed reaction is S-ubiquitinyl-[E2 ubiquitin-conjugating enzyme]-L-cysteine + [acceptor protein]-L-lysine = [E2 ubiquitin-conjugating enzyme]-L-cysteine + N(6)-ubiquitinyl-[acceptor protein]-L-lysine.. Its function is as follows. E3 ubiquitin-protein ligase which regulates the IFN-beta production and antiviral response downstream of various DNA-encoded pattern-recognition receptors (PRRs). Also plays a central role in determining the response to different forms of oxidative stress by controlling levels of DNA glycosylases NEIL1, NEIL3 and NTH1 that are involved in repair of damaged DNA. Promotes nuclear IRF3 ubiquitination and proteasomal degradation. Bridges together TBK1 and NEMO during the innate response to viral infection leading to the activation of TBK1. Positively regulates LPS-mediated inflammatory innate immune response by catalyzing the 'Lys-11'-linked polyubiquitination of TAB1 to enhance its activation and subsequent NF-kappa-B and MAPK signaling. In a manner independent of its catalytic activity, inhibits WWP2, a SOX2-directed E3 ubiquitin ligase, and thus protects SOX2 from polyubiquitination and proteasomal degradation. Ubiquitinates the histone acetyltransferase protein complex component PHF20 and thereby triggers its degradation in the nucleus after its recruitment by the histone demethylase KDM6B, serving as a scaffold protein. Upon induction by TGF-beta, ubiquitinates the TFIID component TAF7 for proteasomal degradation. Induces ferroptosis by ubiquitinating SLC7A11, a critical protein for lipid reactive oxygen species (ROS) scavenging. Inhibits directly hepatitis B virus replication by mediating HBX ubiquitination and subsequent degradation. In terms of biological role, (Microbial infection) Promotes herpes simplex virus type 2/HHV-2 infection in vaginal epithelial cells by decreasing the nuclear localization of IRF3, the primary mediator of type I interferon activation. The polypeptide is Tripartite motif-containing protein 26 (TRIM26) (Homo sapiens (Human)).